The chain runs to 394 residues: MSKKVALAYSGGLDTSICIPLLKEEYGYDEVITVAVDVGQPKEDVAQAEEKAKKISDKHFTLDVREEFVNDYIFPLIRANGDYEGYVMGTSIARPLIAKKVVEIAEQEGAVALAHGCTGKGNDQLRFEAVFRLTDMDVIAPMREMNLTREWEIEYAKEHGIPVGVTTAKPWSVDENIWSRSIEGGKLEDPGYIPPEEIYKWTTAPEDAPDAQIIEIGFENGVPVSLDGQKMGGVELIEKMNIIAGTHGVGRTDMIEDRVLGLKARENYEHPAATVLLAAHKDLEKLVLTRAELKFKATVDAQWSELAYYGLVDEPLYDDLNAFIDKTQERVAGTVTMKLYKGSVLVLARTSPYALYSEELVSFDGTSIDQKDAEGFAKYHGFQARLYRKFVVKN.

Residue 8 to 16 coordinates ATP; it reads AYSGGLDTS. Positions 86 and 91 each coordinate L-citrulline. Gly-116 lines the ATP pocket. L-aspartate is bound by residues Thr-118, Asn-122, and Asp-123. Asn-122 lines the L-citrulline pocket. Positions 126, 172, 181, 256, and 268 each coordinate L-citrulline.

Belongs to the argininosuccinate synthase family. Type 1 subfamily. As to quaternary structure, homotetramer.

It localises to the cytoplasm. It catalyses the reaction L-citrulline + L-aspartate + ATP = 2-(N(omega)-L-arginino)succinate + AMP + diphosphate + H(+). Its pathway is amino-acid biosynthesis; L-arginine biosynthesis; L-arginine from L-ornithine and carbamoyl phosphate: step 2/3. The protein is Argininosuccinate synthase of Methanococcoides burtonii (strain DSM 6242 / NBRC 107633 / OCM 468 / ACE-M).